Reading from the N-terminus, the 208-residue chain is Protein GrpE (208 aa).

Positions 1–62 (MTEKDESVKS…ETAVDPKDEE (62 aa)) are disordered. Over residues 46 to 55 (SNEESSEETA) the composition is skewed to acidic residues.

It belongs to the GrpE family. As to quaternary structure, homodimer.

The protein localises to the cytoplasm. Functionally, participates actively in the response to hyperosmotic and heat shock by preventing the aggregation of stress-denatured proteins, in association with DnaK and GrpE. It is the nucleotide exchange factor for DnaK and may function as a thermosensor. Unfolded proteins bind initially to DnaJ; upon interaction with the DnaJ-bound protein, DnaK hydrolyzes its bound ATP, resulting in the formation of a stable complex. GrpE releases ADP from DnaK; ATP binding to DnaK triggers the release of the substrate protein, thus completing the reaction cycle. Several rounds of ATP-dependent interactions between DnaJ, DnaK and GrpE are required for fully efficient folding. This Staphylococcus haemolyticus (strain JCSC1435) protein is Protein GrpE.